Reading from the N-terminus, the 382-residue chain is 8-amino-7-oxononanoate synthase (382 aa).

Positions 22 and 29 each coordinate substrate. Position 109 to 110 (109 to 110) interacts with pyridoxal 5'-phosphate; sequence GF. His134 contributes to the substrate binding site. Residues Ser182, 207–210, and 233–236 contribute to the pyridoxal 5'-phosphate site; these read DDAH and TLSK. Lys236 is modified (N6-(pyridoxal phosphate)lysine). Residue Thr345 participates in substrate binding.

The protein belongs to the class-II pyridoxal-phosphate-dependent aminotransferase family. BioF subfamily. Homodimer. The cofactor is pyridoxal 5'-phosphate.

The catalysed reaction is 6-carboxyhexanoyl-[ACP] + L-alanine + H(+) = (8S)-8-amino-7-oxononanoate + holo-[ACP] + CO2. It participates in cofactor biosynthesis; biotin biosynthesis. In terms of biological role, catalyzes the decarboxylative condensation of pimeloyl-[acyl-carrier protein] and L-alanine to produce 8-amino-7-oxononanoate (AON), [acyl-carrier protein], and carbon dioxide. The chain is 8-amino-7-oxononanoate synthase from Granulibacter bethesdensis (strain ATCC BAA-1260 / CGDNIH1).